Reading from the N-terminus, the 167-residue chain is Putative NADH-quinone oxidoreductase subunit B 2 (167 aa).

The protein belongs to the complex I 20 kDa subunit family. As to quaternary structure, NDH-1 is composed of 14 different subunits. Subunits NuoB, C, D, E, F, and G constitute the peripheral sector of the complex.

The protein resides in the cell inner membrane. The enzyme catalyses a quinone + NADH + 5 H(+)(in) = a quinol + NAD(+) + 4 H(+)(out). NDH-1 shuttles electrons from NADH, via FMN and iron-sulfur (Fe-S) centers, to quinones in the respiratory chain. Couples the redox reaction to proton translocation (for every two electrons transferred, four hydrogen ions are translocated across the cytoplasmic membrane), and thus conserves the redox energy in a proton gradient. This Burkholderia pseudomallei (strain 1710b) protein is Putative NADH-quinone oxidoreductase subunit B 2.